The sequence spans 856 residues: Lon protease (856 aa).

The 194-residue stretch at 68 to 261 (FPVLPLRDIV…KVLGLMESEI (194 aa)) folds into the Lon N-terminal domain. Residue 412–419 (GPPGVGKT) coordinates ATP. In terms of domain architecture, Lon proteolytic spans 647-828 (EDQVGVVTGL…DEVLHHALLR (182 aa)). Active-site residues include serine 734 and lysine 777.

It belongs to the peptidase S16 family. As to quaternary structure, homohexamer. Organized in a ring with a central cavity.

The protein localises to the cytoplasm. The enzyme catalyses Hydrolysis of proteins in presence of ATP.. Functionally, ATP-dependent serine protease that mediates the selective degradation of mutant and abnormal proteins as well as certain short-lived regulatory proteins. Required for cellular homeostasis and for survival from DNA damage and developmental changes induced by stress. Degrades polypeptides processively to yield small peptide fragments that are 5 to 10 amino acids long. Binds to DNA in a double-stranded, site-specific manner. The sequence is that of Lon protease from Azorhizobium caulinodans (strain ATCC 43989 / DSM 5975 / JCM 20966 / LMG 6465 / NBRC 14845 / NCIMB 13405 / ORS 571).